Consider the following 141-residue polypeptide: Large ribosomal subunit protein uL11 (141 aa).

It belongs to the universal ribosomal protein uL11 family. Part of the ribosomal stalk of the 50S ribosomal subunit. Interacts with L10 and the large rRNA to form the base of the stalk. L10 forms an elongated spine to which L12 dimers bind in a sequential fashion forming a multimeric L10(L12)X complex. Post-translationally, one or more lysine residues are methylated.

Functionally, forms part of the ribosomal stalk which helps the ribosome interact with GTP-bound translation factors. This is Large ribosomal subunit protein uL11 from Chlorobium luteolum (strain DSM 273 / BCRC 81028 / 2530) (Pelodictyon luteolum).